An 802-amino-acid chain; its full sequence is Putative flavin carrier protein 3 (802 aa).

Positions 1–28 (MRFLQVYKSSALIGLIILLASKVNLAEA) are cleaved as a signal peptide. The Lumenal segment spans residues 29–169 (KRKLVATSLV…YFSNGKTVSQ (141 aa)). N-linked (GlcNAc...) asparagine glycosylation occurs at Asn-149. The helical transmembrane segment at 170–190 (IGVKWATAVVAGIGLLLSAIL) threads the bilayer. At 191–200 (STFGNSTAAS) the chain is on the cytoplasmic side. The chain crosses the membrane as a helical span at residues 201-221 (HISANTMSLFLYFQSVVVVAM). The Lumenal segment spans residues 222–229 (QHVHRVPP). Residues 230–250 (IAAAWAENLVWSMGLIRISFM) form a helical membrane-spanning segment. At 251 to 255 (QRIFR) the chain is on the cytoplasmic side. The helical transmembrane segment at 256-278 (WYVQSTGGTPSLYLTSTSMSVLA) threads the bilayer. Residues 279-323 (QRSWQYLMELPLIKRATNVLYGNANTLIFRGIKRLGYKMGIENTS) are Lumenal-facing. Asn-321 carries an N-linked (GlcNAc...) asparagine glycan. A helical membrane pass occupies residues 324–344 (IVCTGFTFFVLCGYVLAGFII). At 345–377 (VFKCCVELATRLGWIQKARFWEFRKQWRMILKG) the chain is on the cytoplasmic side. The chain crosses the membrane as a helical span at residues 378 to 398 (ALLRYIYIGFVQLTILSFWEF). The Lumenal segment spans residues 399 to 405 (TERDSPA). A helical transmembrane segment spans residues 406–426 (VIVIACLFILLSCGLMLWAAW). Residues 427 to 467 (RTVFFARRSVALYNNPAALLYGDEYVLHKYGFFYTMFNANH) are Cytoplasmic-facing. A helical membrane pass occupies residues 468-488 (YWWNIVLLSYIFVKSLLVGFA). At 489–495 (QASGQTQ) the chain is on the lumenal side. A helical membrane pass occupies residues 496 to 516 (VLFMFILDLFYFVAIIYYKPY). At 517–525 (LDRPTNIMN) the chain is on the cytoplasmic side. A helical membrane pass occupies residues 526-546 (ILIATVTVVNSFLFMFFSDLF). Asn-547 carries an N-linked (GlcNAc...) asparagine glycan. The Lumenal segment spans residues 547 to 557 (NQSYKVAAIMG). Residues 558–578 (WIFFIMNAAFSFILLMMILAF) form a helical membrane-spanning segment. Over 579-802 (AGMMLFSKNP…PPGFFDEGFM (224 aa)) the chain is Cytoplasmic. A phosphoserine mark is found at Ser-616 and Ser-635. The segment at 629-802 (KDHDDNSDYE…PPGFFDEGFM (174 aa)) is disordered. 3 stretches are compositionally biased toward polar residues: residues 653-663 (DETTPTTVTSS), 697-717 (KQQT…STLG), and 761-788 (DTSS…NNKQ). A phosphoserine mark is found at Ser-779 and Ser-782.

This sequence belongs to the transient receptor potential (TRP) ion channel family.

The protein resides in the endoplasmic reticulum membrane. In terms of biological role, may be responsible for the transport of FAD into the endoplasmic reticulum lumen, where it is required for oxidative protein folding. This Saccharomyces cerevisiae (strain ATCC 204508 / S288c) (Baker's yeast) protein is Putative flavin carrier protein 3 (FLC3).